Consider the following 414-residue polypeptide: Histidine--tRNA ligase (414 aa).

It belongs to the class-II aminoacyl-tRNA synthetase family. As to quaternary structure, homodimer.

The protein localises to the cytoplasm. It catalyses the reaction tRNA(His) + L-histidine + ATP = L-histidyl-tRNA(His) + AMP + diphosphate + H(+). The protein is Histidine--tRNA ligase of Synechococcus sp. (strain RCC307).